We begin with the raw amino-acid sequence, 544 residues long: MAAKDVQFGNEVRQKMVNGVNILANAVRVTLGPKGRNVVVDRAFGGPHITKDGVTVAKEIELKDKFENMGAQMVKEVASKTNDVAGDGTTTATVLAQSIVAEGMKYVTAGMNPTDLKRGIDKAVAALVEELKNIAKPCDTSKEIAQVGSISANSDEQVGAIIAEAMEKVGKEGVITVEDGKSLENELDVVEGMQFDRGYLSPYFINDAEKQIAGLDNPFVLLFDKKISNIRDLLPVLEQVAKASRPLLIIAEDVEGEALATLVVNNIRGILKTVAVKAPGFGDRRKAMLQDIAILTGGTVISEEVGLSLEKATLDDLGQAKRIEIGKENTTIIDGFGDAAQIEARVAEIRQQIETATSDYDKEKLQERVAKLAGGVAVIKVGAATEVEMKEKKDRVEDALHATRAAVEEGVVAGGGVALLRARAALENLHTGNADQDAGVQIVLRAVESPLRQIVANAGGEPSVVVNKVLEGKGNYGYNAGSGEYGDMIEMGVLDPAKVTRSALQHAASIAGLMLTTDCMIAEIPEDKPAMPDMGGMGGMGGMM.

ATP contacts are provided by residues 30–33 (TLGP), Lys-51, 87–91 (DGTTT), Gly-415, and Asp-495.

Belongs to the chaperonin (HSP60) family. Forms a cylinder of 14 subunits composed of two heptameric rings stacked back-to-back. Interacts with the co-chaperonin GroES.

It localises to the cytoplasm. It catalyses the reaction ATP + H2O + a folded polypeptide = ADP + phosphate + an unfolded polypeptide.. Together with its co-chaperonin GroES, plays an essential role in assisting protein folding. The GroEL-GroES system forms a nano-cage that allows encapsulation of the non-native substrate proteins and provides a physical environment optimized to promote and accelerate protein folding. The chain is Chaperonin GroEL from Neisseria meningitidis serogroup A / serotype 4A (strain DSM 15465 / Z2491).